Here is a 63-residue protein sequence, read N- to C-terminus: Gallinacin-4 (63 aa).

An N-terminal signal peptide occupies residues 1 to 19; it reads MKILCFFIVLLFVAVHGAV. Positions 20 to 25 are excised as a propeptide; that stretch reads GFSRSP. 3 disulfide bridges follow: Cys31/Cys59, Cys38/Cys53, and Cys43/Cys60.

This sequence belongs to the beta-defensin family. As to expression, strong expression in the bone marrow and testis. Widely expressed. Weak expression in the ovarian stroma, but not expressed in the ovarian follicles.

Its subcellular location is the secreted. It is found in the cytoplasmic granule. Has bactericidal activity. Potent activity against S.typhimurium and S.entiriditis. The polypeptide is Gallinacin-4 (GAL4) (Gallus gallus (Chicken)).